We begin with the raw amino-acid sequence, 619 residues long: 1-deoxy-D-xylulose-5-phosphate synthase (619 aa).

Residues histidine 80 and glycine 121–serine 123 each bind thiamine diphosphate. Position 152 (aspartate 152) interacts with Mg(2+). Thiamine diphosphate is bound by residues glycine 153 to alanine 154, asparagine 181, tyrosine 288, and glutamate 370. Residue asparagine 181 participates in Mg(2+) binding.

The protein belongs to the transketolase family. DXPS subfamily. As to quaternary structure, homodimer. Requires Mg(2+) as cofactor. The cofactor is thiamine diphosphate.

The catalysed reaction is D-glyceraldehyde 3-phosphate + pyruvate + H(+) = 1-deoxy-D-xylulose 5-phosphate + CO2. Its pathway is metabolic intermediate biosynthesis; 1-deoxy-D-xylulose 5-phosphate biosynthesis; 1-deoxy-D-xylulose 5-phosphate from D-glyceraldehyde 3-phosphate and pyruvate: step 1/1. Catalyzes the acyloin condensation reaction between C atoms 2 and 3 of pyruvate and glyceraldehyde 3-phosphate to yield 1-deoxy-D-xylulose-5-phosphate (DXP). This Yersinia pestis (strain Pestoides F) protein is 1-deoxy-D-xylulose-5-phosphate synthase.